We begin with the raw amino-acid sequence, 202 residues long: tRNA (pseudouridine(54)-N(1))-methyltransferase (202 aa).

Residues leucine 134 and glycine 155 each coordinate S-adenosyl-L-methionine.

This sequence belongs to the methyltransferase superfamily. TrmY family. Homodimer.

The protein resides in the cytoplasm. It catalyses the reaction pseudouridine(54) in tRNA + S-adenosyl-L-methionine = N(1)-methylpseudouridine(54) in tRNA + S-adenosyl-L-homocysteine + H(+). In terms of biological role, specifically catalyzes the N1-methylation of pseudouridine at position 54 (Psi54) in tRNAs. This is tRNA (pseudouridine(54)-N(1))-methyltransferase from Thermococcus gammatolerans (strain DSM 15229 / JCM 11827 / EJ3).